A 215-amino-acid polypeptide reads, in one-letter code: Protein-L-isoaspartate O-methyltransferase (215 aa).

Ser-62 is an active-site residue.

This sequence belongs to the methyltransferase superfamily. L-isoaspartyl/D-aspartyl protein methyltransferase family.

It localises to the cytoplasm. The enzyme catalyses [protein]-L-isoaspartate + S-adenosyl-L-methionine = [protein]-L-isoaspartate alpha-methyl ester + S-adenosyl-L-homocysteine. Its function is as follows. Catalyzes the methyl esterification of L-isoaspartyl residues in peptides and proteins that result from spontaneous decomposition of normal L-aspartyl and L-asparaginyl residues. It plays a role in the repair and/or degradation of damaged proteins. This is Protein-L-isoaspartate O-methyltransferase from Ruegeria sp. (strain TM1040) (Silicibacter sp.).